Here is a 136-residue protein sequence, read N- to C-terminus: Large ribosomal subunit protein bL17 (136 aa).

The protein belongs to the bacterial ribosomal protein bL17 family. As to quaternary structure, part of the 50S ribosomal subunit. Contacts protein L32.

The chain is Large ribosomal subunit protein bL17 from Rickettsia canadensis (strain McKiel).